Consider the following 373-residue polypeptide: AA9 family lytic polysaccharide monooxygenase A (373 aa).

Positions 1–20 (MKSSTFGMLALAAAAKLVSA) are cleaved as a signal peptide. His-21 contributes to the Cu(2+) binding site. The interval 36–55 (EGNSQSGYIRSPPSNSPITD) is disordered. An intrachain disulfide couples Cys-63 to Cys-183. Cu(2+) is bound at residue His-102. Residues His-169 and Gln-178 each coordinate O2. Residue Tyr-180 participates in Cu(2+) binding. The tract at residues 234–333 (GASGSSSSSS…NSVPQPSSNA (100 aa)) is disordered. 2 stretches are compositionally biased toward low complexity: residues 235-262 (ASGS…APSS) and 270-323 (PATS…AAPT). Residues 324-333 (NSVPQPSSNA) show a composition bias toward polar residues. The CBM1 domain maps to 335–371 (GAVKEWYQCGGLNYSGSTQCEEGLTCKKWNPYYHQCV). The N-linked (GlcNAc...) asparagine glycan is linked to Asn-347.

The protein belongs to the polysaccharide monooxygenase AA9 family. Cu(2+) serves as cofactor.

The protein resides in the secreted. The catalysed reaction is [(1-&gt;4)-beta-D-glucosyl]n+m + reduced acceptor + O2 = 4-dehydro-beta-D-glucosyl-[(1-&gt;4)-beta-D-glucosyl]n-1 + [(1-&gt;4)-beta-D-glucosyl]m + acceptor + H2O.. Lytic polysaccharide monooxygenase (LPMO) that depolymerizes crystalline and amorphous polysaccharides via the oxidation of scissile alpha- or beta-(1-4)-glycosidic bonds, yielding exclusively C4 oxidation products. Catalysis by LPMOs requires the reduction of the active-site copper from Cu(II) to Cu(I) by a reducing agent and H(2)O(2) or O(2) as a cosubstrate. In addition to cellulose, also cleaves the beta-(1!4)-glucan backbone of tamarind xyloglucan, but only next to unsubstituted glucosyl units. The protein is AA9 family lytic polysaccharide monooxygenase A of Aspergillus tamarii.